An 869-amino-acid chain; its full sequence is NACHT, LRR and PYD domains-containing protein 6 (869 aa).

The Pyrin domain maps to 37–128 (KLRDAPLDGR…REHVLRQHAK (92 aa)). In terms of domain architecture, NACHT spans 194 to 511 (LTVVLQGPAG…EFLAALSYLL (318 aa)). 200 to 207 (GPAGIGKT) contacts ATP. The segment at 350–354 (KDKKK) is disordered. Residues 460 to 485 (EEDLEKLKLRGSQVQTIFLNKKEIPG) form an LRR 1 repeat. The segment at 577–608 (VQGQSHPKGPPVGAKKTAELEDIEDAEEEEEE) is disordered. The span at 596-608 (LEDIEDAEEEEEE) shows a compositional bias: acidic residues. 2 LRR repeats span residues 635–658 (LSSLPEIVLERVRLTRMDLEVLNY) and 837–860 (TLSLTSVELSENSLRDLQAVKTSK).

It belongs to the NLRP family. Homomultimer; forms the NLRP6 inflammasome polymeric complex, a filament composed of homopolymers in response to pathogens and other damage-associated signals. The core of NLRP6 inflammasomes consists of a signal sensor component (NLRP6), an adapter (PYCARD/ASC), which recruits effector pro-inflammatory caspases (CASP1 and CASP4). Interacts (via pyrin domain) with PYCARD/ASC (via pyrin domain); interaction takes place following NLRP6 activation and formation of liquid-liquid phase separation (LLPS), initiating nucleation which greatly enhances further addition of soluble PYCARD/ASC molecules to the speck in a prion-like polymerization process. Clustered PYCARD/ASC nucleates the formation of CASP1 (or possibly CASP4) filaments through the interaction of their respective CARD domains, acting as a platform for CASP1 polymerization. CASP1 filament formation increases local enzyme concentration, resulting in trans-autocleavage and activation. Active CASP1 then processes IL1B and IL18 precursors, leading to the release of mature cytokines in the extracellular milieu and inflammatory response. Interacts with DHX15. Polyubiquitinated with 'Lys-63'-linked chains, promoting the interaction with PYCARD/ASC and formation of the NLRP6 inflammasome. Deubiquitination by CYLD decreases the interaction with PYCARD/ASC. Highly expressed in the gastrointestinal tract, predominantly in colonic myofibroblasts and in colonic epithelial and endothelial cells. Within the intestinal mucosa, highly expressed by goblet cells. Also expressed in hepatocytes and in immune cells, including CD4(+) and CD8(+) T-cells, dendritic cells, mastocytes and peritoneal macrophages, as well as in lung, kidney, bladder and gonads.

Its subcellular location is the cytoplasm. The protein resides in the inflammasome. It is found in the cell membrane. It localises to the nucleus membrane. Acts as the sensor component of the NLRP6 inflammasome, which mediates inflammasome activation in response to various pathogen-associated signals, leading to maturation and secretion of IL1B and IL18. Inflammasomes are supramolecular complexes that assemble in the cytosol in response to pathogens and other damage-associated signals and play critical roles in innate immunity and inflammation. Acts as a recognition receptor (PRR): recognizes and binds specific pathogens and other damage-associated signals, such as lipoteichoic acid (LTA), a cell-wall component of Gram-positive bacteria, or double stranded RNA (dsRNA). May also recognize and bind lipopolysaccharide (LPS), a major component of the outer membrane of Gram-negative bacteria; however, LPS is probably not a major activator of the NLRP6 inflammasome. Following LTA- or dsRNA-binding, NLRP6 undergoes liquid-liquid phase separation (LLPS), enhancing multivalent interactions, an essential step for the formation of the NLRP6 inflammasome polymeric complex. The NLRP6 inflammasome acts by promoting recruitment of effector pro-inflammatory caspases (CASP1 and/or CASP4) that catalyze maturation and secretion of IL1B and IL18 in the extracellular milieu. The NLRP6 inflammasome plays a central role in the maintenance of epithelial integrity and host defense against microbial infections in the intestine. Required to restrict infection against Gram-positive bacteria by recognizing lipoteichoic acid (LTA), leading to recruitment of CASP4 and CASP1, and subsequent maturation and secretion of IL1B and IL18. Involved in intestinal antiviral innate immunity together with DHX15: recognizes and binds viral dsRNA to restrict infection by enteric viruses through the interferon pathway and GSDMD-dependent release of IL18. Required to prevent infection by the apicomplexan parasite C.tyzzeri in enterocytes by promoting GSDMD-dependent release of IL18. The NLRP6 inflammasome may also regulate the gut microbiota composition by acting as a sensor of microbiota-associated metabolites to form a PYCARD/ASC-dependent inflammasome for downstream IL18 release and secretion of antimicrobial peptides. Its role in the regulation of the gut microbiota composition is however subject to discussion. Essential for gut mucosal self-renewal and proliferation. Regulate mucus secretion in an inflammasome- and autophagy-dependent manner to prevent invasion by enteric bacteria. During systemic bacterial infections, the NLRP6 inflammasome negatively regulates neutrophil recruitment and neutrophil extracellular traps (NETs) formation. May promote peripheral nerve recovery following injury via an inflammasome-independent mechanism. This Mus musculus (Mouse) protein is NACHT, LRR and PYD domains-containing protein 6.